We begin with the raw amino-acid sequence, 427 residues long: Tumor necrosis factor receptor superfamily member 16 (427 aa).

A signal peptide spans 1-28 (MGAGATGRAMDGPRLLLLLLLGVSLGGA). Residues 29–250 (KEACPTGLYT…PVVTRGTTDN (222 aa)) lie on the Extracellular side of the membrane. TNFR-Cys repeat units follow at residues 31-64 (ACPTGLYTHSGECCKACNLGEGVAQPCGANQTVC), 66-107 (PCLD…DAVC), 108-146 (RCAYGYYQDETTGRCEACRVCEAGSGLVFSCQDKQNTVC), and 148-188 (ECPD…DAEC). 12 cysteine pairs are disulfide-bonded: C32-C43, C44-C57, C47-C64, C67-C83, C86-C99, C89-C107, C109-C122, C125-C138, C128-C146, C149-C164, C167-C180, and C170-C188. An N-linked (GlcNAc...) asparagine glycan is attached at N60. A disordered region spans residues 194 to 219 (RWITRSTPPEGSDSTAPSTQEPEAPP). Residues 197 to 214 (TRSTPPEGSDSTAPSTQE) are compositionally biased toward polar residues. Residues 251 to 272 (LIPVYCSILAAVVVGLVAYIAF) traverse the membrane as a helical segment. The Cytoplasmic portion of the chain corresponds to 273 to 427 (KRWNSCKQNK…CSESTATSPV (155 aa)). Composition is skewed to polar residues over residues 281 to 291 (NKQGANSRPVN) and 305 to 326 (SGISVDSQSLHDQQPHTQTASG). The segment at 281–338 (NKQGANSRPVNQTPPPEGEKLHSDSGISVDSQSLHDQQPHTQTASGQALKGDGGLYSS) is disordered. S311 bears the Phosphoserine mark. The mediates interaction with KIDINS220 stretch occupies residues 326–341 (GQALKGDGGLYSSLPP). Residues 344–421 (REEVEKLLNG…DLVESLCSES (78 aa)) form the Death domain.

As to quaternary structure, homodimer; disulfide-linked. Heterodimer with SORCS2. The extracellular domains of the heterodimer bind NGF. The cytoplasmic region of the heterodimer binds TRIO. NGF binding mediates dissociation of TRIO from the receptor complex. Interacts with RTN4R. Interacts with TRAF2, TRAF4, TRAF6, PTPN13 and RANBP9. Interacts through TRAF6 with SQSTM1 which bridges NGFR to NTRK1. Interacts with BEX1. Interacts with BEX3. Interacts with KIDINS220 and NTRK1. Can form a ternary complex with NTRK1 and KIDINS220 and this complex is affected by the expression levels of KIDINS220. An increase in KIDINS220 expression leads to a decreased association of NGFR and NTRK1. Interacts with NTRK2; may regulate the ligand specificity of the NTRK2 receptor. Interacts (via death domain) with RAB31. Interacts with LINGO1. Interacts with NRADD. Interacts with MAGED1; the interaction antagonizes the association NGFR:NTRK1. Interacts (via death domain) with ARHGDIA and RIPK2. Interacts with BFAR. Post-translationally, N- and O-glycosylated. O-linked glycans consist of Gal(1-3)GalNAc core elongated by 1 or 2 NeuNAc. In terms of processing, phosphorylated on serine residues.

It is found in the cell membrane. The protein localises to the cytoplasm. Its subcellular location is the perikaryon. It localises to the cell projection. The protein resides in the growth cone. It is found in the dendritic spine. Low affinity receptor which can bind to NGF, BDNF, NTF3, and NTF4. Forms a heterodimeric receptor with SORCS2 that binds the precursor forms of NGF, BDNF and NTF3 with high affinity, and has much lower affinity for mature NGF and BDNF. Plays an important role in differentiation and survival of specific neuronal populations during development. Can mediate cell survival as well as cell death of neural cells. Plays a role in the inactivation of RHOA. Plays a role in the regulation of the translocation of GLUT4 to the cell surface in adipocytes and skeletal muscle cells in response to insulin, probably by regulating RAB31 activity, and thereby contributes to the regulation of insulin-dependent glucose uptake. Necessary for the circadian oscillation of the clock genes BMAL1, PER1, PER2 and NR1D1 in the suprachiasmatic nucleus (SCmgetaN) of the brain and in liver and of the genes involved in glucose and lipid metabolism in the liver. Together with BFAR negatively regulates NF-kappa-B and JNK-related signaling pathways. The sequence is that of Tumor necrosis factor receptor superfamily member 16 (NGFR) from Homo sapiens (Human).